A 163-amino-acid polypeptide reads, in one-letter code: Small ribosomal subunit protein uS5 (163 aa).

Residues 8 to 71 (FIEKVVSLNR…EQARKAMMKI (64 aa)) enclose the S5 DRBM domain.

Belongs to the universal ribosomal protein uS5 family. Part of the 30S ribosomal subunit. Contacts proteins S4 and S8.

With S4 and S12 plays an important role in translational accuracy. In terms of biological role, located at the back of the 30S subunit body where it stabilizes the conformation of the head with respect to the body. In Lawsonia intracellularis (strain PHE/MN1-00), this protein is Small ribosomal subunit protein uS5.